Here is a 404-residue protein sequence, read N- to C-terminus: Acetate kinase (404 aa).

Residue Asn-7 coordinates Mg(2+). Residue Lys-14 coordinates ATP. Arg-91 is a substrate binding site. The active-site Proton donor/acceptor is Asp-148. ATP is bound by residues 208-212 (HLGNG) and 283-285 (DLR). Glu-388 contributes to the Mg(2+) binding site.

This sequence belongs to the acetokinase family. Homodimer. It depends on Mg(2+) as a cofactor. Mn(2+) is required as a cofactor.

The protein resides in the cytoplasm. The enzyme catalyses acetate + ATP = acetyl phosphate + ADP. It participates in metabolic intermediate biosynthesis; acetyl-CoA biosynthesis; acetyl-CoA from acetate: step 1/2. Catalyzes the formation of acetyl phosphate from acetate and ATP. Can also catalyze the reverse reaction. The protein is Acetate kinase of Borrelia turicatae (strain 91E135).